A 434-amino-acid polypeptide reads, in one-letter code: Cysteine proteinase 6 (434 aa).

An N-terminal signal peptide occupies residues 1 to 19 (MKVLSALCVLLVSVATAKQ). A propeptide spans 20–113 (QLSELQYRNA…SEKVFGGVQA (94 aa)) (activation peptide). 2 cysteine pairs are disulfide-bonded: Cys133/Cys178 and Cys169/Cys211. Residue Cys136 is part of the active site. Asn227 carries an N-linked (GlcNAc...) asparagine glycan. Cys269 and Cys416 are disulfide-bonded. His276 is an active-site residue. The segment at 285 to 384 (SGSSGSQSQS…GGNSNSGDYP (100 aa)) is disordered. The segment covering 288–347 (SGSQSQSAGSQSQSSNNNWSESSQSQDSNSWSQSSQSQSSQDSNSWSQSSQSQGSNSFTG) has biased composition (low complexity). Asn305 is a glycosylation site (N-linked (GlcNAc...) asparagine). Gly residues predominate over residues 348-358 (AGTGSGSGSVS). The span at 359–381 (GSGSASGSSSFSGSSNGGNSNSG) shows a compositional bias: low complexity. Asn394 is an active-site residue.

Belongs to the peptidase C1 family.

Its subcellular location is the lysosome. In Dictyostelium discoideum (Social amoeba), this protein is Cysteine proteinase 6 (cprF).